A 231-amino-acid chain; its full sequence is Ribose-5-phosphate isomerase A (231 aa).

Substrate-binding positions include 28–31 (TGST), 83–86 (DGAD), and 96–99 (KGGG). E105 serves as the catalytic Proton acceptor. Position 123 (K123) interacts with substrate.

The protein belongs to the ribose 5-phosphate isomerase family. In terms of assembly, homodimer.

The catalysed reaction is aldehydo-D-ribose 5-phosphate = D-ribulose 5-phosphate. It participates in carbohydrate degradation; pentose phosphate pathway; D-ribose 5-phosphate from D-ribulose 5-phosphate (non-oxidative stage): step 1/1. Its function is as follows. Catalyzes the reversible conversion of ribose-5-phosphate to ribulose 5-phosphate. This Agrobacterium fabrum (strain C58 / ATCC 33970) (Agrobacterium tumefaciens (strain C58)) protein is Ribose-5-phosphate isomerase A.